We begin with the raw amino-acid sequence, 285 residues long: Small ribosomal subunit protein uS2 (285 aa).

The tract at residues 231 to 285 (GGKSGQAAAEPMAEWERELLEQHNAQQAEQAEAPAAEAPAEPAEAPAAEAAPQGE) is disordered. The span at 255 to 285 (AQQAEQAEAPAAEAPAEPAEAPAAEAAPQGE) shows a compositional bias: low complexity.

This sequence belongs to the universal ribosomal protein uS2 family.

This Micrococcus luteus (strain ATCC 4698 / DSM 20030 / JCM 1464 / CCM 169 / CCUG 5858 / IAM 1056 / NBRC 3333 / NCIMB 9278 / NCTC 2665 / VKM Ac-2230) (Micrococcus lysodeikticus) protein is Small ribosomal subunit protein uS2.